The following is a 179-amino-acid chain: Orotate phosphoribosyltransferase (179 aa).

5-phospho-alpha-D-ribose 1-diphosphate-binding positions include R94, K95, K98, H100, and 120 to 128 (EDTSTTGNS). 2 residues coordinate orotate: T124 and R152.

Belongs to the purine/pyrimidine phosphoribosyltransferase family. PyrE subfamily. As to quaternary structure, homodimer. The cofactor is Mg(2+).

It catalyses the reaction orotidine 5'-phosphate + diphosphate = orotate + 5-phospho-alpha-D-ribose 1-diphosphate. It functions in the pathway pyrimidine metabolism; UMP biosynthesis via de novo pathway; UMP from orotate: step 1/2. Functionally, catalyzes the transfer of a ribosyl phosphate group from 5-phosphoribose 1-diphosphate to orotate, leading to the formation of orotidine monophosphate (OMP). In Mycobacterium bovis (strain ATCC BAA-935 / AF2122/97), this protein is Orotate phosphoribosyltransferase.